Here is a 235-residue protein sequence, read N- to C-terminus: Glycerol-3-phosphate acyltransferase (235 aa).

6 helical membrane-spanning segments follow: residues 4–24 (LLAILAVSYIIGSIPTSIMAG), 56–76 (SVTLIDIAKGVIAAVSVVAFF), 94–114 (LLAGMAAVIGHVFTVFAGFKG), 125–145 (LIGIAPVSMLIVIGIFLLTVW), 152–172 (VASILAAIAFPLIIAIRKYVF), and 191–211 (FHDSLDYHLMIFGLIVALAIL).

This sequence belongs to the PlsY family. In terms of assembly, probably interacts with PlsX.

It localises to the cell inner membrane. The enzyme catalyses an acyl phosphate + sn-glycerol 3-phosphate = a 1-acyl-sn-glycero-3-phosphate + phosphate. The protein operates within lipid metabolism; phospholipid metabolism. Functionally, catalyzes the transfer of an acyl group from acyl-phosphate (acyl-PO(4)) to glycerol-3-phosphate (G3P) to form lysophosphatidic acid (LPA). This enzyme utilizes acyl-phosphate as fatty acyl donor, but not acyl-CoA or acyl-ACP. The sequence is that of Glycerol-3-phosphate acyltransferase from Chlorobium luteolum (strain DSM 273 / BCRC 81028 / 2530) (Pelodictyon luteolum).